A 193-amino-acid polypeptide reads, in one-letter code: Ion-translocating oxidoreductase complex subunit A (193 aa).

A run of 6 helical transmembrane segments spans residues 5–25 (LLLFVGTILVNNFVLVKFLGL), 39–59 (MGMGLATTFVMTLASICAWLI), 63–83 (ILIPLNLIYLRTLAFILVIAV), 102–122 (LLGIFLPLITTNCAVLGVALL), 134–154 (ALYGFSAAVGFSLVMVLFTAI), and 171–191 (AIALITAGLMSLAFMGFSGLV).

The protein belongs to the NqrDE/RnfAE family. As to quaternary structure, the complex is composed of six subunits: RsxA, RsxB, RsxC, RsxD, RsxE and RsxG.

It is found in the cell inner membrane. Part of a membrane-bound complex that couples electron transfer with translocation of ions across the membrane. Required to maintain the reduced state of SoxR. This Shigella boydii serotype 4 (strain Sb227) protein is Ion-translocating oxidoreductase complex subunit A.